Reading from the N-terminus, the 158-residue chain is SsrA-binding protein (158 aa).

Residues 130 to 158 (KGKKNHDKREAQAKRDWSRQKQRLLKDHG) form a disordered region. Positions 136–158 (DKREAQAKRDWSRQKQRLLKDHG) are enriched in basic and acidic residues.

This sequence belongs to the SmpB family.

It localises to the cytoplasm. In terms of biological role, required for rescue of stalled ribosomes mediated by trans-translation. Binds to transfer-messenger RNA (tmRNA), required for stable association of tmRNA with ribosomes. tmRNA and SmpB together mimic tRNA shape, replacing the anticodon stem-loop with SmpB. tmRNA is encoded by the ssrA gene; the 2 termini fold to resemble tRNA(Ala) and it encodes a 'tag peptide', a short internal open reading frame. During trans-translation Ala-aminoacylated tmRNA acts like a tRNA, entering the A-site of stalled ribosomes, displacing the stalled mRNA. The ribosome then switches to translate the ORF on the tmRNA; the nascent peptide is terminated with the 'tag peptide' encoded by the tmRNA and targeted for degradation. The ribosome is freed to recommence translation, which seems to be the essential function of trans-translation. The polypeptide is SsrA-binding protein (Ruegeria sp. (strain TM1040) (Silicibacter sp.)).